The chain runs to 388 residues: Succinate--CoA ligase [ADP-forming] subunit beta (388 aa).

One can recognise an ATP-grasp domain in the interval 9–244 (KQLFARYGLP…PSQEDSREAH (236 aa)). ATP is bound by residues Lys46, 53-55 (GRG), Glu99, Thr102, and Glu107. Mg(2+)-binding residues include Asn199 and Asp213. Substrate-binding positions include Asn264 and 321–323 (GIV).

Belongs to the succinate/malate CoA ligase beta subunit family. In terms of assembly, heterotetramer of two alpha and two beta subunits. Requires Mg(2+) as cofactor.

It catalyses the reaction succinate + ATP + CoA = succinyl-CoA + ADP + phosphate. The catalysed reaction is GTP + succinate + CoA = succinyl-CoA + GDP + phosphate. Its pathway is carbohydrate metabolism; tricarboxylic acid cycle; succinate from succinyl-CoA (ligase route): step 1/1. Functionally, succinyl-CoA synthetase functions in the citric acid cycle (TCA), coupling the hydrolysis of succinyl-CoA to the synthesis of either ATP or GTP and thus represents the only step of substrate-level phosphorylation in the TCA. The beta subunit provides nucleotide specificity of the enzyme and binds the substrate succinate, while the binding sites for coenzyme A and phosphate are found in the alpha subunit. The chain is Succinate--CoA ligase [ADP-forming] subunit beta from Erwinia tasmaniensis (strain DSM 17950 / CFBP 7177 / CIP 109463 / NCPPB 4357 / Et1/99).